A 503-amino-acid polypeptide reads, in one-letter code: Na(+)-translocating NADH-quinone reductase subunit B (503 aa).

The next 5 membrane-spanning stretches (helical) occupy residues 55–75, 94–114, 120–140, 161–181, and 186–206; these read MMLV…NSGV, ISGF…FSIL, IFLP…VLFA, TLPP…GVVV, and FGGT…FLFF. An FMN phosphoryl threonine modification is found at threonine 248. A run of 5 helical transmembrane segments spans residues 361–381, 387–407, 417–437, 452–472, and 475–495; these read TSTF…IASW, FGIG…LIVG, FFIP…LVFM, WIYG…NPAY, and GVML…YFAV.

Belongs to the NqrB/RnfD family. Composed of six subunits; NqrA, NqrB, NqrC, NqrD, NqrE and NqrF. FMN serves as cofactor.

The protein resides in the cell inner membrane. It carries out the reaction a ubiquinone + n Na(+)(in) + NADH + H(+) = a ubiquinol + n Na(+)(out) + NAD(+). NQR complex catalyzes the reduction of ubiquinone-1 to ubiquinol by two successive reactions, coupled with the transport of Na(+) ions from the cytoplasm to the periplasm. NqrA to NqrE are probably involved in the second step, the conversion of ubisemiquinone to ubiquinol. This Chlamydia caviae (strain ATCC VR-813 / DSM 19441 / 03DC25 / GPIC) (Chlamydophila caviae) protein is Na(+)-translocating NADH-quinone reductase subunit B.